Here is a 155-residue protein sequence, read N- to C-terminus: Deoxyuridine 5'-triphosphate nucleotidohydrolase (155 aa).

Residues 75–77 (RSG), Asn-88, and 92–94 (TVD) contribute to the substrate site.

The protein belongs to the dUTPase family. The cofactor is Mg(2+).

The enzyme catalyses dUTP + H2O = dUMP + diphosphate + H(+). The protein operates within pyrimidine metabolism; dUMP biosynthesis; dUMP from dCTP (dUTP route): step 2/2. In terms of biological role, this enzyme is involved in nucleotide metabolism: it produces dUMP, the immediate precursor of thymidine nucleotides and it decreases the intracellular concentration of dUTP so that uracil cannot be incorporated into DNA. This Caulobacter vibrioides (strain ATCC 19089 / CIP 103742 / CB 15) (Caulobacter crescentus) protein is Deoxyuridine 5'-triphosphate nucleotidohydrolase.